The sequence spans 511 residues: 2-methylbutanal oxime monooxygenase (511 aa).

Helical transmembrane passes span 10-30 (PPQW…LLLF) and 304-324 (ILMN…TWAF). C451 contacts heme.

Belongs to the cytochrome P450 family. The cofactor is heme. As to expression, expressed in storage roots, primary roots, petioles and vascular tissues. Expressed in the outer cortex cells, the endodermis and around the xylem, phloem cells and laticifers.

It localises to the microsome membrane. The catalysed reaction is (1E,2S)-2-methylbutanal oxime + reduced [NADPH--hemoprotein reductase] + O2 = 2-hydroxy-2-methylbutanenitrile + oxidized [NADPH--hemoprotein reductase] + 2 H2O + H(+). It carries out the reaction (E)-2-methylpropanal oxime + reduced [NADPH--hemoprotein reductase] + O2 = 2-hydroxy-2-methylpropanenitrile + oxidized [NADPH--hemoprotein reductase] + 2 H2O + H(+). In terms of biological role, catalyzes the conversion of (E)-2-methylpropanal oxime (valox) to 2-hydroxy-2-methylpropanenitrile (acetone cyanohydrin) and of (E)-2-methylbutanal oxime (ilox) to 2-hydroxy-2-methylbutyronitrile. The reaction takes place in three steps. First, the oxime is isomerized to the (Z)- isomer, next the (Z)-isomer is dehydrated to the corresponding nitrile, followed by a C-hydroxylation of the nitrile. Can use both aliphatic and aromatic oximes as substrates. The chain is 2-methylbutanal oxime monooxygenase (CYP71E7) from Manihot esculenta (Cassava).